The following is a 282-amino-acid chain: Phosphate import ATP-binding protein PstB (282 aa).

A compositionally biased stretch (polar residues) spans 1-25 (MKALNANISTMSEVSRSATPQSDSP). A disordered region spans residues 1-26 (MKALNANISTMSEVSRSATPQSDSPA). Residues 36 to 277 (IRIANFNAWY…PQEKRTDDYV (242 aa)) enclose the ABC transporter domain. Residue 68–75 (GPSGCGKS) participates in ATP binding.

It belongs to the ABC transporter superfamily. Phosphate importer (TC 3.A.1.7) family. The complex is composed of two ATP-binding proteins (PstB), two transmembrane proteins (PstC and PstA) and a solute-binding protein (PstS).

The protein localises to the cell inner membrane. It catalyses the reaction phosphate(out) + ATP + H2O = ADP + 2 phosphate(in) + H(+). Functionally, part of the ABC transporter complex PstSACB involved in phosphate import. Responsible for energy coupling to the transport system. The chain is Phosphate import ATP-binding protein PstB from Rhodopirellula baltica (strain DSM 10527 / NCIMB 13988 / SH1).